Here is a 448-residue protein sequence, read N- to C-terminus: Exodeoxyribonuclease 7 large subunit (448 aa).

It belongs to the XseA family. In terms of assembly, heterooligomer composed of large and small subunits.

It is found in the cytoplasm. It catalyses the reaction Exonucleolytic cleavage in either 5'- to 3'- or 3'- to 5'-direction to yield nucleoside 5'-phosphates.. Its function is as follows. Bidirectionally degrades single-stranded DNA into large acid-insoluble oligonucleotides, which are then degraded further into small acid-soluble oligonucleotides. This Shewanella baltica (strain OS155 / ATCC BAA-1091) protein is Exodeoxyribonuclease 7 large subunit.